The chain runs to 414 residues: Solute carrier family 25 member 46-B (414 aa).

Basic and acidic residues predominate over residues Met1–Glu13. Positions Met1 to Ser89 are disordered. Residues Tyr29–Thr50 show a composition bias toward polar residues. The stretch at Gln92–Pro183 is one Solcar 1 repeat. 6 consecutive transmembrane segments (helical) span residues Phe99–Leu119, Met159–Phe179, His198–Ile218, Leu254–Ile274, Phe310–Leu330, and Leu379–Leu399. The Solcar 2 repeat unit spans residues Glu307–Thr412.

The protein belongs to the mitochondrial carrier (TC 2.A.29) family.

Its subcellular location is the mitochondrion outer membrane. May play a role in mitochondrial dynamics by controlling mitochondrial membrane fission. The chain is Solute carrier family 25 member 46-B (slc25a46-b) from Xenopus laevis (African clawed frog).